The sequence spans 299 residues: Phosphatidylserine decarboxylase proenzyme (299 aa).

Active-site charge relay system; for autoendoproteolytic cleavage activity residues include aspartate 90, histidine 147, and serine 254. Serine 254 acts as the Schiff-base intermediate with substrate; via pyruvic acid; for decarboxylase activity in catalysis. Serine 254 carries the post-translational modification Pyruvic acid (Ser); by autocatalysis.

Belongs to the phosphatidylserine decarboxylase family. PSD-B subfamily. Prokaryotic type I sub-subfamily. Heterodimer of a large membrane-associated beta subunit and a small pyruvoyl-containing alpha subunit. Requires pyruvate as cofactor. Is synthesized initially as an inactive proenzyme. Formation of the active enzyme involves a self-maturation process in which the active site pyruvoyl group is generated from an internal serine residue via an autocatalytic post-translational modification. Two non-identical subunits are generated from the proenzyme in this reaction, and the pyruvate is formed at the N-terminus of the alpha chain, which is derived from the carboxyl end of the proenzyme. The autoendoproteolytic cleavage occurs by a canonical serine protease mechanism, in which the side chain hydroxyl group of the serine supplies its oxygen atom to form the C-terminus of the beta chain, while the remainder of the serine residue undergoes an oxidative deamination to produce ammonia and the pyruvoyl prosthetic group on the alpha chain. During this reaction, the Ser that is part of the protease active site of the proenzyme becomes the pyruvoyl prosthetic group, which constitutes an essential element of the active site of the mature decarboxylase.

It is found in the cell membrane. The enzyme catalyses a 1,2-diacyl-sn-glycero-3-phospho-L-serine + H(+) = a 1,2-diacyl-sn-glycero-3-phosphoethanolamine + CO2. The protein operates within phospholipid metabolism; phosphatidylethanolamine biosynthesis; phosphatidylethanolamine from CDP-diacylglycerol: step 2/2. In terms of biological role, catalyzes the formation of phosphatidylethanolamine (PtdEtn) from phosphatidylserine (PtdSer). This chain is Phosphatidylserine decarboxylase proenzyme, found in Erwinia tasmaniensis (strain DSM 17950 / CFBP 7177 / CIP 109463 / NCPPB 4357 / Et1/99).